The following is a 204-amino-acid chain: Imidazole glycerol phosphate synthase subunit HisH (204 aa).

In terms of domain architecture, Glutamine amidotransferase type-1 spans 5–204; sequence KVVIIDTGCA…AKLIQNFLEL (200 aa). Cys80 (nucleophile) is an active-site residue. Residues His186 and Glu188 contribute to the active site.

Heterodimer of HisH and HisF.

The protein resides in the cytoplasm. The enzyme catalyses 5-[(5-phospho-1-deoxy-D-ribulos-1-ylimino)methylamino]-1-(5-phospho-beta-D-ribosyl)imidazole-4-carboxamide + L-glutamine = D-erythro-1-(imidazol-4-yl)glycerol 3-phosphate + 5-amino-1-(5-phospho-beta-D-ribosyl)imidazole-4-carboxamide + L-glutamate + H(+). It carries out the reaction L-glutamine + H2O = L-glutamate + NH4(+). Its pathway is amino-acid biosynthesis; L-histidine biosynthesis; L-histidine from 5-phospho-alpha-D-ribose 1-diphosphate: step 5/9. IGPS catalyzes the conversion of PRFAR and glutamine to IGP, AICAR and glutamate. The HisH subunit catalyzes the hydrolysis of glutamine to glutamate and ammonia as part of the synthesis of IGP and AICAR. The resulting ammonia molecule is channeled to the active site of HisF. The sequence is that of Imidazole glycerol phosphate synthase subunit HisH from Vibrio parahaemolyticus serotype O3:K6 (strain RIMD 2210633).